A 283-amino-acid polypeptide reads, in one-letter code: Pantothenate synthetase (283 aa).

ATP is bound at residue 30 to 37; it reads MGYFHEGH. His37 serves as the catalytic Proton donor. Gln61 contacts (R)-pantoate. Residue Gln61 participates in beta-alanine binding. Position 147–150 (147–150) interacts with ATP; the sequence is GEKD. Gln153 is a (R)-pantoate binding site. ATP is bound by residues Val176 and 184 to 187; that span reads MSSR.

Belongs to the pantothenate synthetase family. As to quaternary structure, homodimer.

It localises to the cytoplasm. It carries out the reaction (R)-pantoate + beta-alanine + ATP = (R)-pantothenate + AMP + diphosphate + H(+). Its pathway is cofactor biosynthesis; (R)-pantothenate biosynthesis; (R)-pantothenate from (R)-pantoate and beta-alanine: step 1/1. Catalyzes the condensation of pantoate with beta-alanine in an ATP-dependent reaction via a pantoyl-adenylate intermediate. The sequence is that of Pantothenate synthetase from Syntrophobacter fumaroxidans (strain DSM 10017 / MPOB).